Reading from the N-terminus, the 1744-residue chain is Myotubularin-related protein 5 (1744 aa).

Residues 14-150 (DTVAVIVLEE…IRFLTYELVE (137 aa)) form the uDENN domain. One can recognise a cDENN domain in the interval 165-304 (ELGFELIPIS…YYNSLHQRLR (140 aa)). The 107-residue stretch at 306–412 (VMFTTTSQED…LTRALPRRKH (107 aa)) folds into the dDENN domain. The GRAM domain occupies 787–871 (KGNFDPVLAH…LYSMESFKKL (85 aa)). The Myotubularin phosphatase domain maps to 996 to 1447 (NAHIRYAVID…PQIHMWPFLA (452 aa)). Over residues 1102–1116 (TGSMTGSQQTLHSKA) the composition is skewed to polar residues. Positions 1102-1123 (TGSMTGSQQTLHSKASSNEESS) are disordered. The Phorbol-ester/DAG-type zinc finger occupies 1540–1590 (IHELTPFTVGARPVQCCYCTNILTRWSKAVHCKKCRIHVHEGCVNRNITIG). Residues 1643-1743 (PPLCTGYLSK…WKECIEQVIR (101 aa)) enclose the PH domain.

Belongs to the protein-tyrosine phosphatase family. Non-receptor class myotubularin subfamily.

Probably acts as an adapter for other myotubularin-like phosphatases. This chain is Myotubularin-related protein 5, found in Caenorhabditis elegans.